The sequence spans 271 residues: Protein PXR1 (271 aa).

The G-patch domain maps to 25–72; the sequence is TSRFGHQFLEKFGWKPGMGLGLSPMNSNTSHIKVSIKDDNVGLGAKLK. The interval 147 to 239 is disordered; sequence SNAKKRKREG…SASNIPDAVN (93 aa). Over residues 157–168 the composition is skewed to acidic residues; the sequence is DDSEDEDDDDKE. Residues 175–203 are compositionally biased toward basic residues; sequence KKHKKHKKHKKDKKKDKKDKKEHKKHKKE. A compositionally biased stretch (basic and acidic residues) spans 204–221; sequence EKRLKKEKRAEKTKETKK. A Phosphoserine modification is found at Ser230.

It belongs to the PINX1 family. As to quaternary structure, interacts with EST2.

It is found in the nucleus. It localises to the nucleolus. In terms of biological role, involved in rRNA-processing at A0, A1 and A2 sites through its action in U18 and U24 snoRNA 3'-end final trimming. Negative regulator of telomerase through competition for binding to EST2 with TLC1. This is Protein PXR1 (PXR1) from Saccharomyces cerevisiae (strain ATCC 204508 / S288c) (Baker's yeast).